The primary structure comprises 259 residues: NAD kinase (259 aa).

The Proton acceptor role is filled by Asp-43. Residues 43 to 44 (DG), 111 to 112 (NE), and Arg-136 each bind NAD(+).

Belongs to the NAD kinase family. Requires a divalent metal cation as cofactor.

The protein localises to the cytoplasm. It carries out the reaction NAD(+) + ATP = ADP + NADP(+) + H(+). In terms of biological role, involved in the regulation of the intracellular balance of NAD and NADP, and is a key enzyme in the biosynthesis of NADP. Catalyzes specifically the phosphorylation on 2'-hydroxyl of the adenosine moiety of NAD to yield NADP. This is NAD kinase from Mycoplasma pneumoniae (strain ATCC 29342 / M129 / Subtype 1) (Mycoplasmoides pneumoniae).